A 427-amino-acid chain; its full sequence is Serine--tRNA ligase (427 aa).

235–237 serves as a coordination point for L-serine; sequence TAE. ATP-binding positions include 266–268 and valine 282; that span reads RRE. Glutamate 289 serves as a coordination point for L-serine. 353–356 contacts ATP; that stretch reads EASS. An L-serine-binding site is contributed by serine 389.

It belongs to the class-II aminoacyl-tRNA synthetase family. Type-1 seryl-tRNA synthetase subfamily. In terms of assembly, homodimer. The tRNA molecule binds across the dimer.

The protein resides in the cytoplasm. The catalysed reaction is tRNA(Ser) + L-serine + ATP = L-seryl-tRNA(Ser) + AMP + diphosphate + H(+). The enzyme catalyses tRNA(Sec) + L-serine + ATP = L-seryl-tRNA(Sec) + AMP + diphosphate + H(+). Its pathway is aminoacyl-tRNA biosynthesis; selenocysteinyl-tRNA(Sec) biosynthesis; L-seryl-tRNA(Sec) from L-serine and tRNA(Sec): step 1/1. Catalyzes the attachment of serine to tRNA(Ser). Is also able to aminoacylate tRNA(Sec) with serine, to form the misacylated tRNA L-seryl-tRNA(Sec), which will be further converted into selenocysteinyl-tRNA(Sec). This chain is Serine--tRNA ligase, found in Chloroherpeton thalassium (strain ATCC 35110 / GB-78).